A 201-amino-acid polypeptide reads, in one-letter code: Ubiquitin-conjugating enzyme E2 E2 (201 aa).

Residues 1–10 (MSTEAQRVDD) show a composition bias toward basic and acidic residues. Positions 1-55 (MSTEAQRVDDSPSTSGGSSDGDQRESVQQEPDREQVQPKKKEGKISSKTAAKLST) are disordered. Serine 2 carries the post-translational modification N-acetylserine. Phosphoserine is present on residues serine 11, serine 15, serine 18, and serine 19. Basic and acidic residues predominate over residues 21–45 (GDQRESVQQEPDREQVQPKKKEGKI). The span at 46-55 (SSKTAAKLST) shows a compositional bias: low complexity. The region spanning 55–201 (TSAKRIQKEL…ARQWTKRYAT (147 aa)) is the UBC core domain. Cysteine 139 functions as the Glycyl thioester intermediate in the catalytic mechanism.

Belongs to the ubiquitin-conjugating enzyme family. Autoubiquitinated.

The enzyme catalyses S-ubiquitinyl-[E1 ubiquitin-activating enzyme]-L-cysteine + [E2 ubiquitin-conjugating enzyme]-L-cysteine = [E1 ubiquitin-activating enzyme]-L-cysteine + S-ubiquitinyl-[E2 ubiquitin-conjugating enzyme]-L-cysteine.. The protein operates within protein modification; protein ubiquitination. Its function is as follows. Accepts ubiquitin from the E1 complex and catalyzes its covalent attachment to other proteins. In vitro catalyzes 'Lys-11'- and 'Lys-48'-, as well as 'Lys-63'-linked polyubiquitination. Catalyzes the ISGylation of influenza A virus NS1 protein. The chain is Ubiquitin-conjugating enzyme E2 E2 (Ube2e2) from Mus musculus (Mouse).